The chain runs to 99 residues: Integration host factor subunit alpha (99 aa).

This sequence belongs to the bacterial histone-like protein family. Heterodimer of an alpha and a beta chain.

In terms of biological role, this protein is one of the two subunits of integration host factor, a specific DNA-binding protein that functions in genetic recombination as well as in transcriptional and translational control. This is Integration host factor subunit alpha from Pseudoalteromonas translucida (strain TAC 125).